A 1915-amino-acid chain; its full sequence is Ankyrin repeat domain-containing protein 36A (1915 aa).

ANK repeat units lie at residues 31-60 (YHLKRIHRAVLHGNLEKLKYLLLTYYDANK), 64-93 (KERTALHLACATGQPEMVHLLVSRRCELNL), 97-126 (EDRTPLIKAVQLRQEACATLLLQNGANPNI), 130-159 (FGRTALHYAVYNEDTSMIEKLLSHGTNIEE), 163-192 (CEYQPLLFAVSRRKVKMVEFLLKKKANVNA), and 196-225 (LGRSALIHAVTLGEKDIVILLLQHNIDVLS). 5 disordered regions span residues 261–331 (PINS…DEQK), 470–619 (ATGQ…QKQS), 639–663 (MGGGKSGTVSSQKQPASKATSDKTD), 676–1203 (LQCG…KATS), and 1285–1304 (KDVQTSTPAEQDLEMASEGE). Polar residues-rich tracts occupy residues 262–272 (INSNPVSSQKQ) and 297–306 (KSGTVSSQKQ). Low complexity predominate over residues 505-521 (SLTSSEESSERPPLSTL). Basic and acidic residues-rich tracts occupy residues 551 to 562 (PAEKATSDDKDS) and 585 to 596 (PAEKATSDEKDS). Polar residues-rich tracts occupy residues 597-619 (VSNIATEIKKGQQSGTVSPQKQS) and 645-657 (GTVSSQKQPASKA). Basic and acidic residues-rich tracts occupy residues 806–815 (RENKDGEKSR), 874–883 (RENKDGEKSR), 931–951 (SDEKDSFSNITREKKDGEISR), 976–985 (RENKDGEKSR), 1044–1053 (RENKDGEKSR), 1100–1121 (TSDEKDSVLYIAREKKDGEKSR), and 1134–1152 (ICDKEDSVPNMATEKKDEQ). Residues 1175–1196 (VSNIPTEIKDGQQSGTVSSQKQ) are compositionally biased toward polar residues. 4 coiled-coil regions span residues 1383–1466 (IKLK…TEEQ), 1504–1531 (KEDLLHENRLMQDEIARLRLEKDTIKNQ), 1573–1614 (LAAL…ARCD), and 1727–1814 (NMLL…KRDD). Positions 1489–1508 (KTGGNNSNQVSETDEKEDLL) are disordered.

It belongs to the ANKRD36 family.

The sequence is that of Ankyrin repeat domain-containing protein 36A (ANKRD36) from Homo sapiens (Human).